The primary structure comprises 567 residues: Oxygen-dependent choline dehydrogenase (567 aa).

Asp4–Glu33 is a binding site for FAD. Catalysis depends on His473, which acts as the Proton acceptor.

Belongs to the GMC oxidoreductase family. Requires FAD as cofactor.

It carries out the reaction choline + A = betaine aldehyde + AH2. It catalyses the reaction betaine aldehyde + NAD(+) + H2O = glycine betaine + NADH + 2 H(+). It functions in the pathway amine and polyamine biosynthesis; betaine biosynthesis via choline pathway; betaine aldehyde from choline (cytochrome c reductase route): step 1/1. In terms of biological role, involved in the biosynthesis of the osmoprotectant glycine betaine. Catalyzes the oxidation of choline to betaine aldehyde and betaine aldehyde to glycine betaine at the same rate. In Yersinia pseudotuberculosis serotype O:1b (strain IP 31758), this protein is Oxygen-dependent choline dehydrogenase.